The sequence spans 165 residues: Peptidyl-prolyl cis-trans isomerase-like 1 (165 aa).

The PPIase cyclophilin-type domain occupies E3–N157.

It belongs to the cyclophilin-type PPIase family. PPIL1 subfamily.

It carries out the reaction [protein]-peptidylproline (omega=180) = [protein]-peptidylproline (omega=0). Functionally, PPIases accelerate the folding of proteins. It catalyzes the cis-trans isomerization of proline imidic peptide bonds in oligopeptides. The protein is Peptidyl-prolyl cis-trans isomerase-like 1 (cyp3) of Rhizopus delemar (strain RA 99-880 / ATCC MYA-4621 / FGSC 9543 / NRRL 43880) (Mucormycosis agent).